The sequence spans 95 residues: Co-chaperonin GroES (95 aa).

Belongs to the GroES chaperonin family. In terms of assembly, heptamer of 7 subunits arranged in a ring. Interacts with the chaperonin GroEL.

Its subcellular location is the cytoplasm. In terms of biological role, together with the chaperonin GroEL, plays an essential role in assisting protein folding. The GroEL-GroES system forms a nano-cage that allows encapsulation of the non-native substrate proteins and provides a physical environment optimized to promote and accelerate protein folding. GroES binds to the apical surface of the GroEL ring, thereby capping the opening of the GroEL channel. The protein is Co-chaperonin GroES of Streptococcus salivarius.